Consider the following 340-residue polypeptide: MDTKAVGVSKDTAASMEASTVFPGFKFSPTDVELISYYLKRKMDGLERSVEVIPDLEIYNFEPWDLPDKSIVKSDSEWFFFCARGKKYPHGSQNRRATKMGYWKATGKERDVKSGSEVIGTKRTLVFHIGRAPKGERTDWIMHEYCVKGVSLDDAMVVCRVRRNKEYNSGTSQKAPKPNSSAEKHAKVQNGATSSGSPSDWDNLVDFYLAGESGEKLLAEMAESSENLQVDNDEDFFADILRDEIINLDEAVMTGNTPNEVPTLESASMEIRVLPLPNMIDKQMSSLLEERPSQKKKGKDATESLSSCFVGLYSIKSVNKARWDVIIGVVALIAMLFYLE.

One can recognise an NAC domain in the interval 21 to 164; it reads VFPGFKFSPT…AMVVCRVRRN (144 aa). Residues 119–170 mediate DNA binding; it reads IGTKRTLVFHIGRAPKGERTDWIMHEYCVKGVSLDDAMVVCRVRRNKEYNSG. Positions 167 to 181 are enriched in polar residues; it reads YNSGTSQKAPKPNSS. The tract at residues 167-198 is disordered; it reads YNSGTSQKAPKPNSSAEKHAKVQNGATSSGSP.

As to quaternary structure, interacts with PAS1.

Its subcellular location is the cytoplasm. The protein resides in the nucleus. Its function is as follows. Transcription factor involved in plant cell division. This is NAC domain-containing protein 89 (NAC089) from Arabidopsis thaliana (Mouse-ear cress).